The sequence spans 754 residues: Phosphatase and actin regulator 4B (754 aa).

Basic and acidic residues predominate over residues 1–12 (MENRDDEVEHQH). Disordered regions lie at residues 1 to 38 (MENRDDEVEHQHSTMGSEGGTAGDGTPPPKRKGKFSTL), 83 to 105 (KELPDNESGEAHGHKAPYVKNGH), 120 to 625 (VHSP…SKEQ), and 637 to 666 (LTRRLSQRPTAEELEQRNILQPKNEADRQA). An RPEL 1 repeat occupies 61 to 86 (EVLERKMSMRRPRQELIEQGVLKELP). 3 stretches are compositionally biased toward basic and acidic residues: residues 138 to 153 (PEDRRARAPSDGDHRG), 184 to 221 (HGEDIRRGGRAHAEMDKRPGLMKAPSEDGRRTRPEPDW), and 229 to 241 (SSVEEGRGRRESD). Composition is skewed to low complexity over residues 296–307 (SFCSSNSSSSSS) and 316–333 (SSAGANTAPPGGAPLTTS). Composition is skewed to pro residues over residues 348-357 (KQPPMPPPKP), 381-390 (KPSPPMPPKR), 427-445 (LPPPPPSPPLPTHIPPSPP), and 460-478 (YPLPQPLPVHFDPPSPPED). 3 stretches are compositionally biased toward acidic residues: residues 483–503 (DEDDYSDEEEEEEDDEDDEEP), 541–557 (SEEEEDEEDQHPEESDS), and 566–576 (DESDEDEEDDS). Residues 605-615 (QAPERQAKSEH) show a composition bias toward basic and acidic residues. 2 RPEL repeats span residues 635 to 660 (TALTRRLSQRPTAEELEQRNILQPKN) and 673 to 698 (RRLTRKLSQRPTVAELQARKILRFHE). The residue at position 642 (S642) is a Phosphoserine.

This sequence belongs to the phosphatase and actin regulator family. In terms of assembly, binds ppp1ca and actin.

It is found in the cytoplasm. Its subcellular location is the cell projection. The protein resides in the lamellipodium. In terms of biological role, regulator of protein phosphatase 1 (PP1) required for neural tube and optic fissure closure, and enteric neural crest cell (ENCCs) migration during development. Acts as an activator of PP1. During neural tube closure, localizes to the ventral neural tube and activates PP1, leading to down-regulate cell proliferation within cranial neural tissue and the neural retina. Also acts as a regulator of migration of enteric neural crest cells (ENCCs) by activating PP1, leading to repression of the integrin signaling through the rho/rock pathway. The sequence is that of Phosphatase and actin regulator 4B (phactr4b) from Danio rerio (Zebrafish).